A 360-amino-acid polypeptide reads, in one-letter code: Photosystem II protein D1 (360 aa).

The next 3 helical transmembrane spans lie at 30 to 47 (YVGWFGVLMIPCLLAAAA), 119 to 134 (HFLIGISAYMGRQWEL), and 143 to 157 (WICVAYSAPVSAAFA). Histidine 119 is a chlorophyll a binding site. Residue tyrosine 127 coordinates pheophytin a. [CaMn4O5] cluster contacts are provided by aspartate 171 and glutamate 190. A helical transmembrane segment spans residues 198-219 (FHMAGVAGMFGGSLFSAMHGSL). Histidine 199 contributes to the chlorophyll a binding site. Residues histidine 216 and 265–266 (SF) each bind a quinone. Histidine 216 provides a ligand contact to Fe cation. Histidine 273 contributes to the Fe cation binding site. Residues 275–289 (FLAVFPVVCVWLTSM) form a helical membrane-spanning segment. [CaMn4O5] cluster contacts are provided by histidine 333, glutamate 334, aspartate 343, and alanine 345. The propeptide occupies 346 to 360 (AAESTTVALTAPAIG).

Belongs to the reaction center PufL/M/PsbA/D family. In terms of assembly, PSII is composed of 1 copy each of membrane proteins PsbA, PsbB, PsbC, PsbD, PsbE, PsbF, PsbH, PsbI, PsbJ, PsbK, PsbL, PsbM, PsbT, PsbX, PsbY, Psb30/Ycf12, peripheral proteins PsbO, CyanoQ (PsbQ), PsbU, PsbV and a large number of cofactors. It forms dimeric complexes. The cofactor is The D1/D2 heterodimer binds P680, chlorophylls that are the primary electron donor of PSII, and subsequent electron acceptors. It shares a non-heme iron and each subunit binds pheophytin, quinone, additional chlorophylls, carotenoids and lipids. D1 provides most of the ligands for the Mn4-Ca-O5 cluster of the oxygen-evolving complex (OEC). There is also a Cl(-1) ion associated with D1 and D2, which is required for oxygen evolution. The PSII complex binds additional chlorophylls, carotenoids and specific lipids.. Tyr-162 forms a radical intermediate that is referred to as redox-active TyrZ, YZ or Y-Z. Post-translationally, C-terminally processed by CtpA; processing is essential to allow assembly of the oxygen-evolving complex and thus photosynthetic growth.

The protein resides in the cellular thylakoid membrane. It catalyses the reaction 2 a plastoquinone + 4 hnu + 2 H2O = 2 a plastoquinol + O2. Its function is as follows. Photosystem II (PSII) is a light-driven water:plastoquinone oxidoreductase that uses light energy to abstract electrons from H(2)O, generating O(2) and a proton gradient subsequently used for ATP formation. It consists of a core antenna complex that captures photons, and an electron transfer chain that converts photonic excitation into a charge separation. The D1/D2 (PsbA/PsbD) reaction center heterodimer binds P680, the primary electron donor of PSII as well as several subsequent electron acceptors. The sequence is that of Photosystem II protein D1 from Prochlorococcus marinus (strain MIT 9515).